The primary structure comprises 162 residues: Endoribonuclease YbeY (162 aa).

Zn(2+)-binding residues include His-128, His-132, and His-138.

This sequence belongs to the endoribonuclease YbeY family. Zn(2+) is required as a cofactor.

The protein resides in the cytoplasm. In terms of biological role, single strand-specific metallo-endoribonuclease involved in late-stage 70S ribosome quality control and in maturation of the 3' terminus of the 16S rRNA. This Lactococcus lactis subsp. lactis (strain IL1403) (Streptococcus lactis) protein is Endoribonuclease YbeY.